The following is a 294-amino-acid chain: Bifunctional protein FolD (294 aa).

Residues 166–168 (GRS), Ser-191, and Ile-232 contribute to the NADP(+) site.

This sequence belongs to the tetrahydrofolate dehydrogenase/cyclohydrolase family. As to quaternary structure, homodimer.

It catalyses the reaction (6R)-5,10-methylene-5,6,7,8-tetrahydrofolate + NADP(+) = (6R)-5,10-methenyltetrahydrofolate + NADPH. The enzyme catalyses (6R)-5,10-methenyltetrahydrofolate + H2O = (6R)-10-formyltetrahydrofolate + H(+). It participates in one-carbon metabolism; tetrahydrofolate interconversion. Its function is as follows. Catalyzes the oxidation of 5,10-methylenetetrahydrofolate to 5,10-methenyltetrahydrofolate and then the hydrolysis of 5,10-methenyltetrahydrofolate to 10-formyltetrahydrofolate. This Bradyrhizobium sp. (strain BTAi1 / ATCC BAA-1182) protein is Bifunctional protein FolD.